The chain runs to 957 residues: Glycine dehydrogenase (decarboxylating) (957 aa).

Lys-708 is modified (N6-(pyridoxal phosphate)lysine).

It belongs to the GcvP family. In terms of assembly, the glycine cleavage system is composed of four proteins: P, T, L and H. Pyridoxal 5'-phosphate is required as a cofactor.

It carries out the reaction N(6)-[(R)-lipoyl]-L-lysyl-[glycine-cleavage complex H protein] + glycine + H(+) = N(6)-[(R)-S(8)-aminomethyldihydrolipoyl]-L-lysyl-[glycine-cleavage complex H protein] + CO2. Its function is as follows. The glycine cleavage system catalyzes the degradation of glycine. The P protein binds the alpha-amino group of glycine through its pyridoxal phosphate cofactor; CO(2) is released and the remaining methylamine moiety is then transferred to the lipoamide cofactor of the H protein. This chain is Glycine dehydrogenase (decarboxylating), found in Salmonella typhimurium (strain LT2 / SGSC1412 / ATCC 700720).